A 275-amino-acid polypeptide reads, in one-letter code: 4-hydroxy-3-methylbut-2-enyl diphosphate reductase (275 aa).

Cys12 serves as a coordination point for [4Fe-4S] cluster. 2 residues coordinate (2E)-4-hydroxy-3-methylbut-2-enyl diphosphate: His36 and His70. Residues His36 and His70 each contribute to the dimethylallyl diphosphate site. Isopentenyl diphosphate contacts are provided by His36 and His70. [4Fe-4S] cluster is bound at residue Cys92. His120 is a (2E)-4-hydroxy-3-methylbut-2-enyl diphosphate binding site. His120 contributes to the dimethylallyl diphosphate binding site. His120 serves as a coordination point for isopentenyl diphosphate. Glu122 (proton donor) is an active-site residue. Residue Thr158 coordinates (2E)-4-hydroxy-3-methylbut-2-enyl diphosphate. Residue Cys186 coordinates [4Fe-4S] cluster. (2E)-4-hydroxy-3-methylbut-2-enyl diphosphate contacts are provided by Ser214, Ser215, Asn216, and Ser258. Ser214, Ser215, Asn216, and Ser258 together coordinate dimethylallyl diphosphate. Residues Ser214, Ser215, Asn216, and Ser258 each contribute to the isopentenyl diphosphate site.

The protein belongs to the IspH family. The cofactor is [4Fe-4S] cluster.

It carries out the reaction isopentenyl diphosphate + 2 oxidized [2Fe-2S]-[ferredoxin] + H2O = (2E)-4-hydroxy-3-methylbut-2-enyl diphosphate + 2 reduced [2Fe-2S]-[ferredoxin] + 2 H(+). The enzyme catalyses dimethylallyl diphosphate + 2 oxidized [2Fe-2S]-[ferredoxin] + H2O = (2E)-4-hydroxy-3-methylbut-2-enyl diphosphate + 2 reduced [2Fe-2S]-[ferredoxin] + 2 H(+). It functions in the pathway isoprenoid biosynthesis; dimethylallyl diphosphate biosynthesis; dimethylallyl diphosphate from (2E)-4-hydroxy-3-methylbutenyl diphosphate: step 1/1. The protein operates within isoprenoid biosynthesis; isopentenyl diphosphate biosynthesis via DXP pathway; isopentenyl diphosphate from 1-deoxy-D-xylulose 5-phosphate: step 6/6. Its function is as follows. Catalyzes the conversion of 1-hydroxy-2-methyl-2-(E)-butenyl 4-diphosphate (HMBPP) into a mixture of isopentenyl diphosphate (IPP) and dimethylallyl diphosphate (DMAPP). Acts in the terminal step of the DOXP/MEP pathway for isoprenoid precursor biosynthesis. The protein is 4-hydroxy-3-methylbut-2-enyl diphosphate reductase of Campylobacter hominis (strain ATCC BAA-381 / DSM 21671 / CCUG 45161 / LMG 19568 / NCTC 13146 / CH001A).